We begin with the raw amino-acid sequence, 175 residues long: uncharacterized protein (175 aa).

Disordered stretches follow at residues 68-112 (NKNN…DQPY) and 153-175 (PEKA…KLTT). Over residues 94–105 (DEQPMMPYQQPP) the composition is skewed to low complexity.

This sequence belongs to the asfivirus H171R family.

Its subcellular location is the virion. This is an uncharacterized protein from African swine fever virus (isolate Tick/Malawi/Lil 20-1/1983) (ASFV).